The primary structure comprises 329 residues: 4-hydroxythreonine-4-phosphate dehydrogenase (329 aa).

Substrate contacts are provided by His137 and Thr138. Positions 167, 212, and 267 each coordinate a divalent metal cation. Positions 275, 284, and 293 each coordinate substrate.

This sequence belongs to the PdxA family. Homodimer. It depends on Zn(2+) as a cofactor. Requires Mg(2+) as cofactor. The cofactor is Co(2+).

It is found in the cytoplasm. It catalyses the reaction 4-(phosphooxy)-L-threonine + NAD(+) = 3-amino-2-oxopropyl phosphate + CO2 + NADH. It functions in the pathway cofactor biosynthesis; pyridoxine 5'-phosphate biosynthesis; pyridoxine 5'-phosphate from D-erythrose 4-phosphate: step 4/5. In terms of biological role, catalyzes the NAD(P)-dependent oxidation of 4-(phosphooxy)-L-threonine (HTP) into 2-amino-3-oxo-4-(phosphooxy)butyric acid which spontaneously decarboxylates to form 3-amino-2-oxopropyl phosphate (AHAP). The protein is 4-hydroxythreonine-4-phosphate dehydrogenase of Stutzerimonas stutzeri (strain A1501) (Pseudomonas stutzeri).